The primary structure comprises 180 residues: MANRLKEKYTNEVVPALTEKFNYSSVMAVPKVEKIVLNMGVGDAVSNAKNLEKAAAELALISGQKPLITKAKKSIAGFRLREGVAIGAKVTLRGERMYEFLDKLVSVSLPRVRDFHGVPTKSFDGRGNYTLGVKEQLIFPEINFDDVDKVRGLDIVIVTTANTDEESRELLKGLGMPFAK.

Belongs to the universal ribosomal protein uL5 family. As to quaternary structure, part of the 50S ribosomal subunit; part of the 5S rRNA/L5/L18/L25 subcomplex. Contacts the 5S rRNA and the P site tRNA. Forms a bridge to the 30S subunit in the 70S ribosome.

This is one of the proteins that bind and probably mediate the attachment of the 5S RNA into the large ribosomal subunit, where it forms part of the central protuberance. In the 70S ribosome it contacts protein S13 of the 30S subunit (bridge B1b), connecting the 2 subunits; this bridge is implicated in subunit movement. Contacts the P site tRNA; the 5S rRNA and some of its associated proteins might help stabilize positioning of ribosome-bound tRNAs. In Streptococcus agalactiae serotype Ia (strain ATCC 27591 / A909 / CDC SS700), this protein is Large ribosomal subunit protein uL5.